A 303-amino-acid polypeptide reads, in one-letter code: Suppressor of silencing P0 (303 aa).

The protein belongs to the polerovirus P0 protein family.

Suppressor of RNA-mediated gene silencing. This chain is Suppressor of silencing P0, found in Pea enation mosaic virus-1 (strain WSG) (PEMV-1).